The sequence spans 99 residues: Cyclin-dependent kinases regulatory subunit (99 aa).

The protein belongs to the CKS family. In terms of assembly, forms a homohexamer that can probably bind six kinase subunits.

Binds to the catalytic subunit of the cyclin dependent kinases (Cdc2) and is essential for their biological function. The polypeptide is Cyclin-dependent kinases regulatory subunit (Leishmania mexicana).